Reading from the N-terminus, the 94-residue chain is DNA-directed RNA polymerase subunit omega (94 aa).

Belongs to the RNA polymerase subunit omega family. As to quaternary structure, the RNAP catalytic core consists of 2 alpha, 1 beta, 1 beta' and 1 omega subunit. When a sigma factor is associated with the core the holoenzyme is formed, which can initiate transcription.

The catalysed reaction is RNA(n) + a ribonucleoside 5'-triphosphate = RNA(n+1) + diphosphate. Its function is as follows. Promotes RNA polymerase assembly. Latches the N- and C-terminal regions of the beta' subunit thereby facilitating its interaction with the beta and alpha subunits. In Frankia alni (strain DSM 45986 / CECT 9034 / ACN14a), this protein is DNA-directed RNA polymerase subunit omega.